The primary structure comprises 1047 residues: Atrial natriuretic peptide receptor 2 (1047 aa).

The first 16 residues, 1-16 (MALPSLLLVVAALAGG), serve as a signal peptide directing secretion. Residues 17–458 (VRPPGARNLT…DKTPLSTLAI (442 aa)) are Extracellular-facing. N-linked (GlcNAc...) asparagine glycosylation is found at Asn24 and Asn35. The cysteines at positions 75 and 101 are disulfide-linked. N-linked (GlcNAc...) asparagine glycosylation is found at Asn161, Asn195, Asn244, Asn277, and Asn349. Residues 459-478 (VALGTGVTFIMFGVSSFLIF) form a helical membrane-spanning segment. Residues 479 to 1047 (RKLMLEKELA…GEQKGPPGLL (569 aa)) are Cytoplasmic-facing. The residue at position 513 (Ser513) is a Phosphoserine. The Protein kinase domain occupies 513–786 (SRLTLSLRGS…PDFGQIKGFI (274 aa)). A Phosphothreonine modification is found at Thr516. Residues Ser518, Ser522, Ser523, and Ser526 each carry the phosphoserine modification. Thr529 carries the phosphothreonine modification. Residues 861–991 (TIYFSDIVGF…DTVNTASRME (131 aa)) form the Guanylate cyclase domain.

The protein belongs to the adenylyl cyclase class-4/guanylyl cyclase family. Post-translationally, phosphorylated. Phosphorylation of the protein kinase-like domain is required for full activation by CNP. Glycosylated. Widely expressed. Expressed in the columnar proliferating and prehypertrophic chondrocyte layers of the tibia.

Its subcellular location is the cell membrane. It catalyses the reaction GTP = 3',5'-cyclic GMP + diphosphate. Functionally, receptor for the C-type natriuretic peptide NPPC/CNP hormone. Has guanylate cyclase activity upon binding of its ligand. May play a role in the regulation of skeletal growth. The sequence is that of Atrial natriuretic peptide receptor 2 (Npr2) from Mus musculus (Mouse).